The following is a 722-amino-acid chain: Formin-like protein 16 (722 aa).

Disordered stretches follow at residues 1–56 (MSPV…PMFD), 564–606 (ATED…PSRP), 635–672 (VGSP…HLSH), and 690–722 (PLLV…LRYQ). Positions 22-55 (PLPPPPPPPMRRSAPSPPPMSGRVPPPPPPPPMF) are enriched in pro residues. The region spanning 182–571 (FRCPVTKRSS…KAATEDVFGG (390 aa)) is the FH2 domain. Composition is skewed to pro residues over residues 593–605 (IRPP…PPSR), 638–658 (PSPP…PPPM), and 709–722 (APPP…LRYQ).

Belongs to the formin-like family. Class-II subfamily.

The polypeptide is Formin-like protein 16 (FH16) (Arabidopsis thaliana (Mouse-ear cress)).